The following is a 620-amino-acid chain: Long-chain fatty acid transport protein 2 (620 aa).

The Lumenal portion of the chain corresponds to 1-4; sequence MLPV. Residues 5–27 form a helical membrane-spanning segment; sequence LYTGLAGLLLLPLLLTCCCPYLL. The Cytoplasmic segment spans residues 28–106; the sequence is QDVRFFLQLA…DHLGLRQGDC (79 aa). The chain crosses the membrane as a helical span at residues 107-127; it reads VALFMGNEPAYVWLWLGLLKL. The Lumenal segment spans residues 128-267; it reads GCPMACLNYN…DVIYTTMPLY (140 aa). An AMP-binding site is contributed by 222–233; sequence YIYTSGTTGLPK. The helical transmembrane segment at 268 to 288 threads the bilayer; the sequence is HSAALMIGLHGCIVVGATFAL. Over 289–620 the chain is Cytoplasmic; sequence RSKFSASQFW…NAIIDKTLKL (332 aa). The residue at position 291 (K291) is an N6-acetyllysine. A Phosphothreonine modification is found at T577.

Belongs to the ATP-dependent AMP-binding enzyme family. In terms of tissue distribution, liver and kidney (at protein level).

It localises to the endoplasmic reticulum membrane. The protein resides in the peroxisome membrane. Its subcellular location is the cell membrane. It is found in the microsome. It catalyses the reaction a fatty acid(in) = a fatty acid(out). The catalysed reaction is (9Z)-octadecenoate(out) = (9Z)-octadecenoate(in). The enzyme catalyses a long-chain fatty acid + ATP + CoA = a long-chain fatty acyl-CoA + AMP + diphosphate. It carries out the reaction (5Z,8Z,11Z,14Z)-eicosatetraenoate + ATP + CoA = (5Z,8Z,11Z,14Z)-eicosatetraenoyl-CoA + AMP + diphosphate. It catalyses the reaction (9Z,12Z,15Z)-octadecatrienoate + ATP + CoA = (9Z,12Z,15Z)-octadecatrienoyl-CoA + AMP + diphosphate. The catalysed reaction is hexadecanoate + ATP + CoA = hexadecanoyl-CoA + AMP + diphosphate. The enzyme catalyses (9Z)-octadecenoate + ATP + CoA = (9Z)-octadecenoyl-CoA + AMP + diphosphate. It carries out the reaction 2,6,10,14-tetramethylpentadecanoate + ATP + CoA = pristanoyl-CoA + AMP + diphosphate. It catalyses the reaction (E)-hexadec-2-enoate + ATP + CoA = (2E)-hexadecenoyl-CoA + AMP + diphosphate. The catalysed reaction is 3,7,11,15-tetramethylhexadecanoate + ATP + CoA = phytanoyl-CoA + AMP + diphosphate. The enzyme catalyses a very long-chain fatty acid + ATP + CoA = a very long-chain fatty acyl-CoA + AMP + diphosphate. It carries out the reaction tetracosanoate + ATP + CoA = tetracosanoyl-CoA + AMP + diphosphate. It catalyses the reaction (4Z,7Z,10Z,13Z,16Z,19Z)-docosahexaenoate + ATP + CoA = (4Z,7Z,10Z,13Z,16Z,19Z)-docosahexaenoyl-CoA + AMP + diphosphate. The catalysed reaction is (25R)-3alpha,7alpha,12alpha-trihydroxy-5beta-cholestan-26-oate + ATP + CoA = (25R)-3alpha,7alpha,12alpha-trihydroxy-5beta-cholestan-26-oyl-CoA + AMP + diphosphate. Mediates the import of long-chain fatty acids (LCFA) into the cell by facilitating their transport across cell membranes, playing an important role in hepatic fatty acid uptake. Also functions as an acyl-CoA ligase catalyzing the ATP-dependent formation of fatty acyl-CoA using LCFA and very-long-chain fatty acids (VLCFA) as substrates, which prevents fatty acid efflux from cells and might drive more fatty acid uptake. Plays a pivotal role in regulating available LCFA substrates from exogenous sources in tissues undergoing high levels of beta-oxidation or triglyceride synthesis. Can also activate branched-chain fatty acids such as phytanic acid and pristanic acid. May contribute to the synthesis of sphingosine-1-phosphate. Does not activate C24 bile acids, cholate and chenodeoxycholate. In vitro, activates 3-alpha,7-alpha,12-alpha-trihydroxy-5-beta-cholestanate (THCA), the C27 precursor of cholic acid deriving from the de novo synthesis from cholesterol. However, it is not critical for THCA activation and bile synthesis in vivo. The protein is Long-chain fatty acid transport protein 2 (Slc27a2) of Rattus norvegicus (Rat).